A 513-amino-acid polypeptide reads, in one-letter code: Protein disulfide-isomerase 2 (513 aa).

The signal sequence occupies residues 1 to 20 (MNKFLALLFVLALFANIAFS). Thioredoxin domains lie at 21–147 (CEGH…EELK) and 355–486 (DVIG…DNAA). Catalysis depends on nucleophile residues Cys70, Cys73, Cys406, and Cys409. Disulfide bonds link Cys70/Cys73 and Cys406/Cys409. The interval 491 to 513 (LPSSQTDDNVESKKDSSAKHDEL) is disordered. Basic and acidic residues predominate over residues 500–513 (VESKKDSSAKHDEL). A Prevents secretion from ER motif is present at residues 510–513 (HDEL).

This sequence belongs to the protein disulfide isomerase family.

Its subcellular location is the endoplasmic reticulum lumen. The catalysed reaction is Catalyzes the rearrangement of -S-S- bonds in proteins.. Its function is as follows. Participates in the folding of proteins containing disulfide bonds, may be involved in glycosylation, prolyl hydroxylation and triglyceride transfer. The protein is Protein disulfide-isomerase 2 (pdi2) of Dictyostelium discoideum (Social amoeba).